Here is a 205-residue protein sequence, read N- to C-terminus: Small ribosomal subunit protein uS4 (205 aa).

The segment covering 1 to 16 (MSKRESSKYKIDRRMG) has biased composition (basic and acidic residues). Residues 1-46 (MSKRESSKYKIDRRMGENIWGRPKSPVNRREYGPGQHGQRRKSKLS) form a disordered region. Residues 94 to 157 (SRLDAIVYRA…KQLVTVLEAV (64 aa)) enclose the S4 RNA-binding domain.

It belongs to the universal ribosomal protein uS4 family. Part of the 30S ribosomal subunit. Contacts protein S5. The interaction surface between S4 and S5 is involved in control of translational fidelity.

In terms of biological role, one of the primary rRNA binding proteins, it binds directly to 16S rRNA where it nucleates assembly of the body of the 30S subunit. With S5 and S12 plays an important role in translational accuracy. This is Small ribosomal subunit protein uS4 from Sinorhizobium medicae (strain WSM419) (Ensifer medicae).